The chain runs to 324 residues: Mevalonate kinase (324 aa).

ATP is bound at residue 103–113 (PPRAGLGSSAA). Asp-154 serves as the catalytic Proton acceptor.

The protein belongs to the GHMP kinase family. Mevalonate kinase subfamily. As to quaternary structure, homodimer. It depends on Mg(2+) as a cofactor.

It is found in the cytoplasm. The catalysed reaction is (R)-mevalonate + ATP = (R)-5-phosphomevalonate + ADP + H(+). Its pathway is isoprenoid biosynthesis; isopentenyl diphosphate biosynthesis via mevalonate pathway; isopentenyl diphosphate from (R)-mevalonate: step 1/3. Its function is as follows. Catalyzes the phosphorylation of (R)-mevalonate (MVA) to (R)-mevalonate 5-phosphate (MVAP). Functions in the mevalonate (MVA) pathway leading to isopentenyl diphosphate (IPP), a key precursor for the biosynthesis of isoprenoid compounds such as archaeal membrane lipids. In Aeropyrum pernix (strain ATCC 700893 / DSM 11879 / JCM 9820 / NBRC 100138 / K1), this protein is Mevalonate kinase.